The sequence spans 434 residues: Sulfide-quinone reductase (434 aa).

FAD contacts are provided by residues 8-12 (GAGTG), 34-35 (SA), and 77-78 (SA). C160 functions as the Cysteine persulfide intermediate in the catalytic mechanism. Residues I302 and G322 each coordinate FAD. C356 acts as the Cysteine persulfide intermediate in catalysis. K391 provides a ligand contact to FAD.

This sequence belongs to the SQRD family. As to quaternary structure, homodimer. FAD is required as a cofactor.

Its subcellular location is the membrane. It carries out the reaction n a quinone + n hydrogen sulfide + n H(+) = polysulfur(n-2) + n a quinol. Functionally, catalyzes the oxidation of hydrogen sulfide, with the help of a quinone. Consecutive reaction cycles lead to the accumulation of a polysulfide product on the active site Cys residues; these products are released when they exceed a critical length, typically as cyclooctasulfur. This Acidithiobacillus ferrooxidans (strain ATCC 23270 / DSM 14882 / CIP 104768 / NCIMB 8455) (Ferrobacillus ferrooxidans (strain ATCC 23270)) protein is Sulfide-quinone reductase.